Consider the following 64-residue polypeptide: Small hydrophobic protein (64 aa).

Over 1 to 20 (MENTSITIEFSSKFWPYFTL) the chain is Intravirion. The interaction with host BCAP31 stretch occupies residues 6–15 (ITIEFSSKFW). Residues 21 to 44 (IHMITTIISLLIIISIMIAILNKL) traverse the membrane as a helical; Signal-anchor for type II membrane protein segment. The interval 38–43 (IAILNK) is interaction with small-molecule inhibitor. Over 45-64 (CEYNVFHNKTFELPRARVNT) the chain is Virion surface. The N-linked (GlcNAc...) asparagine; by host glycan is linked to Asn-52.

This sequence belongs to the orthopneumovirus small hydrophobic protein family. In terms of assembly, homopentamer forming a funnel-like pore. Interacts with glycoprotein G; this interaction occurs on the surface of virion particles and infected cells. Interacts with host BCAP31 (via C-terminus); this interaction is direct. Four species of SH have been detected in infected cell cytoplasm: a 7.5 kDa non-glycosylated form (SH0), a 13-15 kDa form that contains one or two N-linked carbohydrate side chains of the high-mannose type (SHg), a 21-30 kDa polylactosaminoglycan-modified form of the protein (SHp), and the isoform generated by alternative translational initiation. Of these different forms, SH0 is by far the most abundant protein detected during virus infection. In terms of processing, tyrosine phosphorylated.

Its subcellular location is the virion membrane. The protein localises to the host cell membrane. It is found in the host Golgi apparatus membrane. It localises to the host endoplasmic reticulum membrane. Its activity is regulated as follows. Channel activity is inhibited by copper. Also inhibited by small-molecule pyronin B. Its function is as follows. Viroporin that forms a homopentameric ion channel displaying low ion selectivity. May play a role in virus morphogenesis and pathogenicity at various stages of the viral life cycle. Accumulates at the membrane of the Golgi apparatus in infected cells and may facilitate virus release by modifying the secretory pathway. May enhance host membrane permeability and disrupt cellular ion homeostasis, which can be sensed as damage-associated molecular patterns/danger signals, triggering NLRP3 inflammasome activation and inflammatory immune response. Also inhibits host TNFA-mediated signaling pathway and may delay apoptosis, allowing time for the virus to replicate. This Homo sapiens (Human) protein is Small hydrophobic protein.